A 391-amino-acid chain; its full sequence is MVMFKKIKSFEVVFNDPEKVYGCGEKVAGRVIVEVCEVTRIKAVRILACGVAKVLWMQGSQQCKQTLDYLRYEDTLLLDDHPTGENEMVIMRPGNKYEYKFGFELPQGPLGTSFKGKYGCVDYWVKAFLDRPSQPTQETKKHFEVMDLVDVNTPDLMAPVSAKKEKKVSCMFIPDGRVSVSARIDRKGFCEGDEINIHADFENTCSRIVVPKAAIVARHTYLANGQTKVLTQKLSSVRGNHIISGTCASWRGKSLRVQKIRPSILGCNILRVEYFLLIYVSVPGSKKVILDLPLVIGSRSGLSSRTSSMASRTSSEMSWVDLNIPDTPEAPPCYMDIIPEDHRLESPTTPLLDDTDGSQDSPIFMYAPEFKFMPPPTYSEVDPCILNNNVQ.

Residue K212 forms a Glycyl lysine isopeptide (Lys-Gly) (interchain with G-Cter in ubiquitin) linkage. Phosphoserine is present on S361.

The protein belongs to the arrestin family. As to quaternary structure, homodimer; disulfide-linked. Interacts with TXN/thioredoxin through its redox-active site. Interacts with transcriptional repressors ZBTB16, ZBTB32 and HDAC1. Interacts with DDIT4. Ubiquitinated; undergoes heterotypic 'Lys-48'-/'Lys-63'-branched polyubiquitination catalyzed by ITCH and UBR5 resulting in proteasomal degradation. Deubiquitinated by USP5, leading to TXNIP stabilization.

Its subcellular location is the cytoplasm. In terms of biological role, may act as an oxidative stress mediator by inhibiting thioredoxin activity or by limiting its bioavailability. Interacts with COPS5 and restores COPS5-induced suppression of CDKN1B stability, blocking the COPS5-mediated translocation of CDKN1B from the nucleus to the cytoplasm. Functions as a transcriptional repressor, possibly by acting as a bridge molecule between transcription factors and corepressor complexes, and over-expression will induce G0/G1 cell cycle arrest. Required for the maturation of natural killer cells. Acts as a suppressor of tumor cell growth. Inhibits the proteasomal degradation of DDIT4, and thereby contributes to the inhibition of the mammalian target of rapamycin complex 1 (mTORC1). This is Thioredoxin-interacting protein (TXNIP) from Sus scrofa (Pig).